The sequence spans 250 residues: Urease accessory protein UreF (250 aa).

The disordered stretch occupies residues 1 to 21 (MDEADPGEAEAAQAEAAQDGA). Residues 9-21 (AEAAQAEAAQDGA) show a composition bias toward low complexity.

Belongs to the UreF family. As to quaternary structure, ureD, UreF and UreG form a complex that acts as a GTP-hydrolysis-dependent molecular chaperone, activating the urease apoprotein by helping to assemble the nickel containing metallocenter of UreC. The UreE protein probably delivers the nickel.

The protein resides in the cytoplasm. Required for maturation of urease via the functional incorporation of the urease nickel metallocenter. The chain is Urease accessory protein UreF from Methylobacterium sp. (strain 4-46).